The sequence spans 539 residues: Tyrosine-protein kinase csk-1 (539 aa).

Positions 43 to 110 (SPGNDVIVTR…HADCVVRING (68 aa)) constitute an SH3 domain. The interval 129-148 (PGAASTTSSTSSHHSTAANH) is disordered. Low complexity predominate over residues 131 to 146 (AASTTSSTSSHHSTAA). An SH2 domain is found at 151–241 (WFHSMISREN…GLCHRLVTPI (91 aa)). Residues 283–535 (IDVGDTIGHG…GQVLQRLTTI (253 aa)) enclose the Protein kinase domain. ATP contacts are provided by residues 289-297 (IGHGEFGDV) and lysine 310. The Proton acceptor role is filled by aspartate 403.

This sequence belongs to the protein kinase superfamily. Tyr protein kinase family. CSK subfamily. It depends on Mg(2+) as a cofactor. Mn(2+) serves as cofactor. As to expression, expressed predominantly in pharyngeal muscles in procorpus, metacorpus and terminal bulb. Expressed also in some neurons (ASE, ADF, AVA, AUA, RMDV and BAG) in the head region, anchor cell, vulva, cells around anus, body wall muscle and gondal distal tip cells.

It carries out the reaction L-tyrosyl-[protein] + ATP = O-phospho-L-tyrosyl-[protein] + ADP + H(+). Non-receptor tyrosine-protein kinase which plays a role in pharynx function by regulating pumping and the orientation of pharyngeal muscle fibers, independently of src-1 and src-2. May phosphorylate and thereby negatively regulate src-1 and src-2 activities. The chain is Tyrosine-protein kinase csk-1 from Caenorhabditis elegans.